A 282-amino-acid polypeptide reads, in one-letter code: Probable endonuclease 4 (282 aa).

H69, H109, E145, D179, H182, H216, D229, H231, and E261 together coordinate Zn(2+).

This sequence belongs to the AP endonuclease 2 family. Zn(2+) serves as cofactor.

It carries out the reaction Endonucleolytic cleavage to 5'-phosphooligonucleotide end-products.. Functionally, endonuclease IV plays a role in DNA repair. It cleaves phosphodiester bonds at apurinic or apyrimidinic (AP) sites, generating a 3'-hydroxyl group and a 5'-terminal sugar phosphate. This chain is Probable endonuclease 4, found in Campylobacter fetus subsp. fetus (strain 82-40).